Here is a 338-residue protein sequence, read N- to C-terminus: Phosphate transport system permease protein PstC 1 (338 aa).

Helical transmembrane passes span 19 to 39, 93 to 113, 123 to 143, 144 to 164, 181 to 201, 232 to 252, 254 to 274, and 295 to 315; these read GGIG…VLVI, TSAI…LVIV, AVGI…GLWG, AMTF…HNAP, GMLV…ATTT, LPWV…RALG, TMAV…NIYA, and TNFA…ITLL. The region spanning 87 to 320 is the ABC transmembrane type-1 domain; the sequence is IVGTLATSAI…VITLLTNVAA (234 aa).

This sequence belongs to the binding-protein-dependent transport system permease family. CysTW subfamily.

The protein resides in the cell membrane. Functionally, part of the binding-protein-dependent transport system for phosphate; probably responsible for the translocation of the substrate across the membrane. This is Phosphate transport system permease protein PstC 1 (pstC1) from Mycobacterium bovis (strain ATCC BAA-935 / AF2122/97).